Reading from the N-terminus, the 192-residue chain is Pyridoxal 5'-phosphate synthase subunit PdxT (192 aa).

53–55 contacts L-glutamine; it reads GES. C82 functions as the Nucleophile in the catalytic mechanism. L-glutamine-binding positions include R108 and 134-135; that span reads IR. Catalysis depends on charge relay system residues H170 and E172.

Belongs to the glutaminase PdxT/SNO family. In the presence of PdxS, forms a dodecamer of heterodimers. Only shows activity in the heterodimer.

The catalysed reaction is aldehydo-D-ribose 5-phosphate + D-glyceraldehyde 3-phosphate + L-glutamine = pyridoxal 5'-phosphate + L-glutamate + phosphate + 3 H2O + H(+). The enzyme catalyses L-glutamine + H2O = L-glutamate + NH4(+). It participates in cofactor biosynthesis; pyridoxal 5'-phosphate biosynthesis. Its function is as follows. Catalyzes the hydrolysis of glutamine to glutamate and ammonia as part of the biosynthesis of pyridoxal 5'-phosphate. The resulting ammonia molecule is channeled to the active site of PdxS. The sequence is that of Pyridoxal 5'-phosphate synthase subunit PdxT from Methanosphaera stadtmanae (strain ATCC 43021 / DSM 3091 / JCM 11832 / MCB-3).